The chain runs to 192 residues: MSEEQLQKPIDCADVKGEAEKISTTEGGIKAAEDKEKGVVAEASGEQAEGEVNQKKVVANPLKSEGTITIGEALEAAVLTAGNKPVEWSDAAAIQAAEVRATGRTNIMPGGVAASAQSAATLNARIGSDDTKTTLADVLTGASSKLPSDKAATRKDAEGVTGAEMRNDPHLTTYPTGVAASVAAAARINQSK.

Positions 5–9 match the Nuclear localization signal (NLS) motif; that stretch reads QLQKP. 2 SMP domains span residues 68–125 and 133–190; these read ITIG…LNAR and TTLA…RINQ. Residues 146–174 are disordered; the sequence is LPSDKAATRKDAEGVTGAEMRNDPHLTTY. The segment covering 147 to 158 has biased composition (basic and acidic residues); it reads PSDKAATRKDAE.

This sequence belongs to the LEA type SMP family.

Its subcellular location is the cytoplasm. The protein resides in the nucleus. In terms of biological role, LEA proteins are late embryonic proteins abundant in higher plant seed embryos. The function of those proteins is not known. This Arabidopsis thaliana (Mouse-ear cress) protein is Late embryogenesis abundant protein 47.